The sequence spans 140 residues: Large ribosomal subunit protein bL17 (140 aa).

It belongs to the bacterial ribosomal protein bL17 family. In terms of assembly, part of the 50S ribosomal subunit. Contacts protein L32.

The sequence is that of Large ribosomal subunit protein bL17 from Rhizobium leguminosarum bv. trifolii (strain WSM2304).